We begin with the raw amino-acid sequence, 79 residues long: Orally active insecticidal peptide (79 aa).

Positions M1–T19 are cleaved as a signal peptide. The propeptide occupies S20–R44. Disulfide bonds link C46–C61, C53–C66, and C60–C73. A77 carries the post-translational modification Alanine amide.

It belongs to the neurotoxin 03 (Tx2) family. 01 subfamily. In terms of tissue distribution, expressed by the venom gland.

It is found in the secreted. Functionally, probable ion channel inhibitor. Shows insecticidal activity when injected into mealworms. The chain is Orally active insecticidal peptide from Selenotypus plumipes (Australian featherleg tarantula).